Consider the following 350-residue polypeptide: Uroporphyrinogen decarboxylase (350 aa).

Substrate contacts are provided by residues Arg-27–Arg-31, Phe-46, Asp-76, Tyr-152, Ser-207, and His-321.

The protein belongs to the uroporphyrinogen decarboxylase family. Homodimer.

The protein resides in the cytoplasm. It carries out the reaction uroporphyrinogen III + 4 H(+) = coproporphyrinogen III + 4 CO2. It participates in porphyrin-containing compound metabolism; protoporphyrin-IX biosynthesis; coproporphyrinogen-III from 5-aminolevulinate: step 4/4. In terms of biological role, catalyzes the decarboxylation of four acetate groups of uroporphyrinogen-III to yield coproporphyrinogen-III. The chain is Uroporphyrinogen decarboxylase from Listeria monocytogenes serotype 4a (strain HCC23).